Consider the following 225-residue polypeptide: Claudin-17 (225 aa).

Residues 1-7 (MAFYPLQ) are Cytoplasmic-facing. A helical membrane pass occupies residues 8 to 28 (IAGLVLGFLGMVGTLATTLLP). Over 29-81 (QWRVSAFIGSNIIVFERIWEGLWMNCVRQAKARLQCKFYSSMLALSPALEAAR) the chain is Extracellular. A helical membrane pass occupies residues 82–102 (ALMCVAVALSLIALIIGICGM). The Cytoplasmic segment spans residues 103-124 (KKIQCTGSNERAKAYLLGTSGV). A helical transmembrane segment spans residues 125 to 145 (LFILTGIFVLIPVCWTANIII). The Extracellular portion of the chain corresponds to 146 to 164 (RDFYNPAVHVGQKRELGAA). The chain crosses the membrane as a helical span at residues 165–185 (LFLGWASVAVLFIAGGLLCGF). At 186–225 (CCCNRKKQRDGYPAPRPSMPRTDERRRNMTRQSETPTSYV) the chain is on the cytoplasmic side. Residues 194–225 (RDGYPAPRPSMPRTDERRRNMTRQSETPTSYV) are disordered. Residues 215–225 (TRQSETPTSYV) are compositionally biased toward polar residues.

The protein belongs to the claudin family. As to quaternary structure, does not form homotypic polymeric strands and it is not sufficient to form tight junctions by its own. Interacts with OCLN.

The protein resides in the cell junction. Its subcellular location is the tight junction. It is found in the cell membrane. The enzyme catalyses chloride(in) = chloride(out). It catalyses the reaction hydrogencarbonate(in) = hydrogencarbonate(out). It carries out the reaction bromide(in) = bromide(out). The catalysed reaction is iodide(out) = iodide(in). The enzyme catalyses fluoride(in) = fluoride(out). It catalyses the reaction nitrate(in) = nitrate(out). It carries out the reaction thiocyanate(in) = thiocyanate(out). In terms of biological role, channel-forming tight junction protein with selectivity for anions, including chloride and hydrogencarbonate, and for solutes smaller than 9 Angstrom in diameter. In the kidney proximal tubule, may be involved in quantitative reabsorption of filtered anions. Does not affect water permeability. The sequence is that of Claudin-17 (CLDN17) from Sus scrofa (Pig).